Reading from the N-terminus, the 284-residue chain is Acetylglutamate kinase (284 aa).

Substrate-binding positions include Gly54 to Gly55, Arg76, and Asn179.

It belongs to the acetylglutamate kinase family. ArgB subfamily.

Its subcellular location is the cytoplasm. It carries out the reaction N-acetyl-L-glutamate + ATP = N-acetyl-L-glutamyl 5-phosphate + ADP. The protein operates within amino-acid biosynthesis; L-arginine biosynthesis; N(2)-acetyl-L-ornithine from L-glutamate: step 2/4. Functionally, catalyzes the ATP-dependent phosphorylation of N-acetyl-L-glutamate. This chain is Acetylglutamate kinase, found in Sorangium cellulosum (strain So ce56) (Polyangium cellulosum (strain So ce56)).